A 670-amino-acid polypeptide reads, in one-letter code: DNA ligase (670 aa).

NAD(+) contacts are provided by residues 34–38 (DAEYD), 84–85 (SL), 116–119 (EHKV), Arg139, Glu174, Tyr226, Lys291, and Lys315. The active-site N6-AMP-lysine intermediate is the Lys118. Zn(2+) is bound by residues Cys409, Cys412, Cys425, and Cys430. The region spanning 586 to 670 (EVSDLLSGLT…LKEKGAPVPA (85 aa)) is the BRCT domain.

The protein belongs to the NAD-dependent DNA ligase family. LigA subfamily. Mg(2+) serves as cofactor.

The enzyme catalyses NAD(+) + (deoxyribonucleotide)n-3'-hydroxyl + 5'-phospho-(deoxyribonucleotide)m = (deoxyribonucleotide)n+m + AMP + beta-nicotinamide D-nucleotide.. Its function is as follows. DNA ligase that catalyzes the formation of phosphodiester linkages between 5'-phosphoryl and 3'-hydroxyl groups in double-stranded DNA using NAD as a coenzyme and as the energy source for the reaction. It is essential for DNA replication and repair of damaged DNA. In Thermus filiformis, this protein is DNA ligase.